We begin with the raw amino-acid sequence, 158 residues long: MGSDKKTTEEKRKHKRNSPSSPRDEVKSKRQNIKGDEERRKEKDKSKKEKHKSHKSKCHSSEEKKSGEKHKTKSHKHKDKSKNKFEELSKDDYFSKNNEFASWLKDKKNLFFSDLSSETARNLFSDFVIQWNKGKLDSQYYEGIATGPRSSHAWNIKK.

2 stretches are compositionally biased toward basic and acidic residues: residues 1 to 11 and 22 to 47; these read MGSDKKTTEEK and PRDEVKSKRQNIKGDEERRKEKDKSK. The tract at residues 1–88 is disordered; that stretch reads MGSDKKTTEE…DKSKNKFEEL (88 aa). Basic residues-rich tracts occupy residues 48-58 and 67-81; these read KEKHKSHKSKC and GEKHKTKSHKHKDKS.

In terms of tissue distribution, specifically expressed in flowers pistils, especially in stigmas and styles. Barely detected in roots, stems, leaves, sepals, petals and stamen.

It is found in the nucleus. In terms of biological role, component of the auxin signaling transduction pathway that regulates cell proliferation and differentiation during flowers stigmas and styles development. Involved in the regulation of auxin-related genes. This is Style cell-cycle inhibitor 1-B from Nicotiana tabacum (Common tobacco).